We begin with the raw amino-acid sequence, 517 residues long: Ammonium transporter 3 (517 aa).

At 1-32 (MLNEPNALLRRDANSTIATVTELFPNEYSNAD) the chain is on the extracellular side. Residues 33–53 (IAYVLLSTVVVFTVTPGIALY) traverse the membrane as a helical segment. The Cytoplasmic segment spans residues 54 to 69 (YAGMVRKNSALSILTQ). A helical transmembrane segment spans residues 70-90 (SFLVTAVVFIQWYLFGYSLAC). Residues 91–118 (SSGSSFYGTLWQGGMNHLWLEPYIPGST) are Extracellular-facing. The helical transmembrane segment at 119-139 (IPAIVYFPFGGLFAVATAQLF) threads the bilayer. Residues 140-148 (AGAMAERGR) lie on the Cytoplasmic side of the membrane. Residues 149–169 (LIPSLVISFLYITLVYCPQAY) traverse the membrane as a helical segment. Topologically, residues 170-180 (WTWAPNGWLYT) are extracellular. A helical transmembrane segment spans residues 181–201 (LGALDFAGGGPVHISSGFAAL). Over 202–272 (AYSLCLGRRI…AHNPPHDAGM (71 aa)) the chain is Cytoplasmic. The chain crosses the membrane as a helical span at residues 273-293 (VYIGVVLIWFAWLCFNSGTLL). Residues 294–299 (TVNIRT) are Extracellular-facing. A helical membrane pass occupies residues 300–320 (AYIMTNTLISSSFGALTWAII). Topologically, residues 321–327 (DYIRYRK) are cytoplasmic. A helical membrane pass occupies residues 328–348 (FSTIGICEGAIAGLVGITPAC). Residue Gly349 is a topological domain, extracellular. Residues 350–370 (FVFPWGAAAGGIVPALVCNFL) traverse the membrane as a helical segment. The Cytoplasmic segment spans residues 371-384 (HDLNEWIGVDETLR). A helical membrane pass occupies residues 385–405 (VFNLHGIGGIVGSIVLGVVAH). Over 406 to 432 (PDVAASDGATVIDGGWAVHHWKQMGYQ) the chain is Extracellular. The helical transmembrane segment at 433–453 (FAGFTSVAAWSFVITAIICLL) threads the bilayer. Over 454–517 (VDLVPGLHIR…NIKQEKQDEF (64 aa)) the chain is Cytoplasmic.

Belongs to the ammonia transporter channel (TC 1.A.11.2) family.

It is found in the membrane. Its function is as follows. Transporter for ammonium to use as a nitrogen source. This Schizosaccharomyces pombe (strain 972 / ATCC 24843) (Fission yeast) protein is Ammonium transporter 3 (amt3).